Here is a 313-residue protein sequence, read N- to C-terminus: Pantoate--beta-alanine ligase (313 aa).

36–43 (MGYLHQGH) contributes to the ATP binding site. H43 functions as the Proton donor in the catalytic mechanism. Q71 lines the (R)-pantoate pocket. Q71 serves as a coordination point for beta-alanine. 178–181 (GKKD) is a binding site for ATP. Q184 lines the (R)-pantoate pocket. 215–218 (MSSR) contacts ATP.

Belongs to the pantothenate synthetase family. Homodimer.

The protein localises to the cytoplasm. The protein resides in the cytosol. It catalyses the reaction (R)-pantoate + beta-alanine + ATP = (R)-pantothenate + AMP + diphosphate + H(+). It functions in the pathway cofactor biosynthesis; (R)-pantothenate biosynthesis; (R)-pantothenate from (R)-pantoate and beta-alanine: step 1/1. Functionally, catalyzes the condensation of pantoate with beta-alanine to form pantothenate. Essential for panthotenate biosynthesis. The polypeptide is Pantoate--beta-alanine ligase (PANC) (Oryza sativa subsp. japonica (Rice)).